Here is a 1388-residue protein sequence, read N- to C-terminus: MSSSVRRKGKPGKGDGKGSSRGGRGGKGHMNKSHGGGGGGGGSCGGGGGGSRKASNRIWDDGDDFCVFTEPKRPSRPCDSNKSKGETRPKWKPKAKVPLQTLHMTSENQEKVKALLRDLQEQGADAGSERGTSGEEEDSEPQCGEEQGWPAGQEPIFLPDCSPWEYIGPEEVEPPVPECAVSPLAVQKLSRYGFHTEHCQLALRICDGDLGAALEHLLRQCFSETFGERMALSEAAVYVSLNECVEQRQEETLALKSICGEKFIERIQNRVWTIGLELDYLTNKFCKSKQKESSKNVRDTSPETCKFYLKGNCKFGSKCKFKHEVPPHQMIGRAERNVNDPHLDADDDTTFMYELQIRFSKDHKYPYQAPLVAFYSTNENLPLACRLHISEFLYGKALEFAKTSEPVVYSLITLLEEESEIVKLLTHTQHKYSVPPVNVPPVPSETRISKPAYRKPVVPSNTFLSNQMLEGERLSELEEDADEDEGPASIIVENESYVNLKKRSYKRYDRPAKSLFAENSKICRQFQMKQASRQFHAILQERQLLPAWEERETILKLLSKHQVVVISGMTGCGKTTQIPQFILDNSLNGPPERVANIICTQPRRISAISVAERVAKERAERVGLTVGYQIRLESVKSSATRLLYCTTGVLLRRLEGDATLQGVTHIIVDEVHERTEESDFLLLVLKDIVMQRATLQVILMSATLDAGLFSKYFSYCPVITIPGRAFPVDQFFLEDALAVTRYVLQDGSPYMRSMKQIAKEKLKARHNRTAQEEVEEDLRLSLHLQDEEESVKDTIPDQQLDFKQLLIRYKGVSKSVIKTMSVMDFEKVNLELIEALLEWIVDGKHAYPPGAVLVFLPGLAEIKMLYEQLQSNSLFNNRRSHRCVIHPLHSSLSSEEQQAVFVKPPMGVTKIIISTNIAETSITIDDVVYVIDSGKMKEKRYDAGKGMESLEDTFVSQANALQRKGRAGRVASGVCFHLFTSHHYNHQLLKQQLPEIQRVPLEQLCLRIKILEMFSTHNLQSVFSRLIEPPHIDSLRASKVRLRDLGALTPDEKLTPLGYHLASLPVDVRIGKLMLLGSIFRCLDPALTIAASLAFKSPFVSPWDKKEEANQKKLEFAFANSDYLALLCAYKGWQLSTKESARASYNYCRQNFLSGRTLQEMASLKRQFTELLSDIGFVKEGLRAKEIEKRAQGGDGVLDATGEEANTNAENPKLISAVLCAALYPNVVQVKTPEGKFQKTSSGVVRLQPKSAELKFVTKNDGYVHIHPSSVNYQVRHFDSPYLLYHEKIKTSRVFIRDCSMVSVYPLVLFGGGQVNVQLQRGAFVVSLDDGWIRFVAASHQVAELVKELRCELDQLLQDKIKNPSMDLCSCPRGSRIISMIVKLITTQ.

Residues 1–11 (MSSSVRRKGKP) are compositionally biased toward basic residues. Disordered stretches follow at residues 1-107 (MSSS…MTSE) and 121-154 (EQGADAGSERGTSGEEEDSEPQCGEEQGWPAGQE). The segment covering 34 to 51 (HGGGGGGGGSCGGGGGGS) has biased composition (gly residues). Residues 79-89 (DSNKSKGETRP) show a composition bias toward basic and acidic residues. Phosphoserine is present on residues Ser128 and Ser133. The region spanning 175-220 (PVPECAVSPLAVQKLSRYGFHTEHCQLALRICDGDLGAALEHLLRQ) is the UBA domain. The C3H1-type zinc finger occupies 299–326 (DTSPETCKFYLKGNCKFGSKCKFKHEVP). Ser475 is subject to Phosphoserine. A Helicase ATP-binding domain is found at 555–722 (LKLLSKHQVV…FSYCPVITIP (168 aa)). ATP is bound at residue 568–575 (GMTGCGKT). The DEVH box signature appears at 669-672 (DEVH). A Helicase C-terminal domain is found at 832–1012 (LIEALLEWIV…QLCLRIKILE (181 aa)).

It belongs to the DEAD box helicase family. DEAH subfamily.

The catalysed reaction is ATP + H2O = ADP + phosphate + H(+). Probable ATP-binding RNA helicase. The chain is Putative ATP-dependent RNA helicase DHX57 (Dhx57) from Mus musculus (Mouse).